A 1178-amino-acid polypeptide reads, in one-letter code: MLEGCILADSRQSKTAASPSPSRPQSSSNNSVPGAPNRVSFAKLREPLEVPGLLDVQTDSFEWLIGSPRWRESAAERGDVNPVGGLEEVLYELSPIEDFSGSMSLSFSDPRFDDVKAPVDECKDKDMTYAAPLFVTAEFINNNTGEIKSQTVFMGDFPMMTEKGTFIINGTERVVVSQLVRSPGVYFDETIDKSTDKTLHSVKVIPSRGAWLEFDVDKRDTVGVRIDRKRRQPVTVLLKALGWTSEQIVERFGFSEIMRSTLEKDNTVGTDEALLDIYRKLRPGEPPTKESAQTLLENLFFKEKRYDLARVGRYKVNKKLGLHVGEPITSSTLTEEDVVATIEYLVRLHEGQTTMTVPGGVEVPVETDDIDHFGNRRLRTVGELIQNQIRVGMSRMERVVRERMTTQDVEAITPQTLINIRPVVAAIKEFFGTSQLSQFMDQNNPLSGLTHKRRLSALGPGGLSRERAGLEVRDVHPSHYGRMCPIETPEGPNIGLIGSLSVYARVNPFGFIETPYRKVVDGVVSDEIVYLTADEEDRHVVAQANSPIDADGRFVEPRVLVRRKAGEVEYVPSSEVDYMDVSPRQMVSVATAMIPFLEHDDANRALMGANMQRQAVPLVRSEAPLVGTGMELRAAIDAGDVVVAEESGVIEEVSADYITVMHDNGTRRTYRMRKFARSNHGTCANQCPIVDAGDRVEAGQVIADGPCTDDGEMALGKNLLVAIMPWEGHNYEDAIILSNRLVEEDVLTSIHIEEHEIDARDTKLGAEEITRDIPNISDEVLADLDERGIVRIGAEVRDGDILVGKVTPKGETELTPEERLLRAIFGEKAREVRDTSLKVPHGESGKVIGIRVFSREDEDELPAGVNELVRVYVAQKRKISDGDKLAGRHGNKGVIGKILPVEDMPFLADGTPVDIILNTHGVPRRMNIGQILETHLGWCAHSGWKVDAAKGVPDWAARLPDELLEAQPNAIVSTPVFDGAQEAELQGLLSCTLPNRDGDVLVDADGKAMLFDGRSGEPFPYPVTVGYMYIMKLHHLVDDKIHARSTGPYSMITQQPLGGKAQFGGQRFGEMECWAMQAYGAAYTLQELLTIKSDDTVGRVKVYEAIVKGENIPEPGIPESFKVLLKELQSLCLNVEVLSSDGAAIELREGEDEDLERAAANLGINLSRNESASVEDLA.

The tract at residues 1–37 (MLEGCILADSRQSKTAASPSPSRPQSSSNNSVPGAPN) is disordered. Positions 18-33 (SPSPSRPQSSSNNSVP) are enriched in low complexity.

The protein belongs to the RNA polymerase beta chain family. As to quaternary structure, the RNAP catalytic core consists of 2 alpha, 1 beta, 1 beta' and 1 omega subunit. When a sigma factor is associated with the core the holoenzyme is formed, which can initiate transcription.

It carries out the reaction RNA(n) + a ribonucleoside 5'-triphosphate = RNA(n+1) + diphosphate. DNA-dependent RNA polymerase catalyzes the transcription of DNA into RNA using the four ribonucleoside triphosphates as substrates. The protein is DNA-directed RNA polymerase subunit beta of Mycobacterium tuberculosis (strain CDC 1551 / Oshkosh).